Here is a 248-residue protein sequence, read N- to C-terminus: MSARQHTPDLRADGFTFKRFFIAHDRCAMKVGTDGILLGAWAPLRHESRILDVGCGSALISLMLAQRCEGRVPVDAVELDIAASVQAAENVAASPWRDTVVVHQADIVEFSCTTPHRYSLVVSNPPYFAAGVACASPQRTQARYTSSLSHEALLHSVSAVLMPEGRFCVVLPSQIVGDFLFLAESLQWHLALRVDVADNPRRPVHRVLLALTQAPIDPVYSSALLIRDELQQYSPDYRALTQDFYLSM.

Belongs to the methyltransferase superfamily. tRNA (adenine-N(6)-)-methyltransferase family.

The protein localises to the cytoplasm. The enzyme catalyses adenosine(37) in tRNA1(Val) + S-adenosyl-L-methionine = N(6)-methyladenosine(37) in tRNA1(Val) + S-adenosyl-L-homocysteine + H(+). Functionally, specifically methylates the adenine in position 37 of tRNA(1)(Val) (anticodon cmo5UAC). This chain is tRNA1(Val) (adenine(37)-N6)-methyltransferase, found in Musicola paradisiaca (strain Ech703) (Dickeya paradisiaca).